A 603-amino-acid polypeptide reads, in one-letter code: Probable methyltransferase-like protein 25 (603 aa).

A disordered region spans residues 326 to 352 (TSSQQIPNRETSEANKERRKMTSKSSE).

Its function is as follows. Probable methyltransferase. This is Probable methyltransferase-like protein 25 (METTL25) from Homo sapiens (Human).